The primary structure comprises 79 residues: MAKSDIHPKWYPEAKVYCNGQVVMTVGSTKPELHVDVWSGNHPFYTGTQKIIDTEGRVERFLRKYGMSSTQTSGEQNKK.

This sequence belongs to the bacterial ribosomal protein bL31 family. Type A subfamily. In terms of assembly, part of the 50S ribosomal subunit.

Functionally, binds the 23S rRNA. This chain is Large ribosomal subunit protein bL31, found in Trichormus variabilis (strain ATCC 29413 / PCC 7937) (Anabaena variabilis).